A 465-amino-acid polypeptide reads, in one-letter code: ATP synthase subunit beta (465 aa).

152–159 (GGAGVGKT) contacts ATP.

Belongs to the ATPase alpha/beta chains family. In terms of assembly, F-type ATPases have 2 components, CF(1) - the catalytic core - and CF(0) - the membrane proton channel. CF(1) has five subunits: alpha(3), beta(3), gamma(1), delta(1), epsilon(1). CF(0) has three main subunits: a(1), b(2) and c(9-12). The alpha and beta chains form an alternating ring which encloses part of the gamma chain. CF(1) is attached to CF(0) by a central stalk formed by the gamma and epsilon chains, while a peripheral stalk is formed by the delta and b chains.

It localises to the cell inner membrane. It catalyses the reaction ATP + H2O + 4 H(+)(in) = ADP + phosphate + 5 H(+)(out). In terms of biological role, produces ATP from ADP in the presence of a proton gradient across the membrane. The catalytic sites are hosted primarily by the beta subunits. This chain is ATP synthase subunit beta, found in Campylobacter jejuni subsp. jejuni serotype O:6 (strain 81116 / NCTC 11828).